A 340-amino-acid chain; its full sequence is Flap endonuclease 1 (340 aa).

The interval M1–R98 is N-domain. Residues D27, D80, E152, E154, D173, D175, and D236 each contribute to the Mg(2+) site. The segment at E116–K258 is I-domain. Positions K330–F338 are interaction with PCNA.

This sequence belongs to the XPG/RAD2 endonuclease family. FEN1 subfamily. Interacts with PCNA. PCNA stimulates the nuclease activity without altering cleavage specificity. It depends on Mg(2+) as a cofactor.

Structure-specific nuclease with 5'-flap endonuclease and 5'-3' exonuclease activities involved in DNA replication and repair. During DNA replication, cleaves the 5'-overhanging flap structure that is generated by displacement synthesis when DNA polymerase encounters the 5'-end of a downstream Okazaki fragment. Binds the unpaired 3'-DNA end and kinks the DNA to facilitate 5' cleavage specificity. Cleaves one nucleotide into the double-stranded DNA from the junction in flap DNA, leaving a nick for ligation. Also involved in the base excision repair (BER) pathway. Acts as a genome stabilization factor that prevents flaps from equilibrating into structures that lead to duplications and deletions. Also possesses 5'-3' exonuclease activity on nicked or gapped double-stranded DNA. The polypeptide is Flap endonuclease 1 (Pyrococcus furiosus (strain ATCC 43587 / DSM 3638 / JCM 8422 / Vc1)).